A 317-amino-acid chain; its full sequence is Protoheme IX farnesyltransferase (317 aa).

A run of 8 helical transmembrane segments spans residues V39–N59, P60–I80, G109–T129, L131–W151, I160–G180, L184–L204, V249–V269, and F297–V317.

Belongs to the UbiA prenyltransferase family. Protoheme IX farnesyltransferase subfamily.

It localises to the cell inner membrane. It carries out the reaction heme b + (2E,6E)-farnesyl diphosphate + H2O = Fe(II)-heme o + diphosphate. It functions in the pathway porphyrin-containing compound metabolism; heme O biosynthesis; heme O from protoheme: step 1/1. In terms of biological role, converts heme B (protoheme IX) to heme O by substitution of the vinyl group on carbon 2 of heme B porphyrin ring with a hydroxyethyl farnesyl side group. This is Protoheme IX farnesyltransferase from Acidiphilium cryptum (strain JF-5).